The chain runs to 139 residues: D-ribose pyranase (139 aa).

The active-site Proton donor is His-20. Substrate contacts are provided by residues Asp-28, His-106, and 128-130 (YAN).

It belongs to the RbsD / FucU family. RbsD subfamily. As to quaternary structure, homodecamer.

The protein localises to the cytoplasm. The enzyme catalyses beta-D-ribopyranose = beta-D-ribofuranose. Its pathway is carbohydrate metabolism; D-ribose degradation; D-ribose 5-phosphate from beta-D-ribopyranose: step 1/2. Functionally, catalyzes the interconversion of beta-pyran and beta-furan forms of D-ribose. This is D-ribose pyranase from Vibrio parahaemolyticus serotype O3:K6 (strain RIMD 2210633).